Reading from the N-terminus, the 124-residue chain is Small ribosomal subunit protein uS12cz/uS12cy (124 aa).

Belongs to the universal ribosomal protein uS12 family. As to quaternary structure, part of the 30S ribosomal subunit.

It is found in the plastid. The protein localises to the chloroplast. With S4 and S5 plays an important role in translational accuracy. Located at the interface of the 30S and 50S subunits. This is Small ribosomal subunit protein uS12cz/uS12cy (rps12-A) from Agrostis stolonifera (Creeping bentgrass).